The sequence spans 322 residues: Glutamyl-Q tRNA(Asp) synthetase (322 aa).

Residues 28-32 (RFAPS) and glutamate 64 each bind L-glutamate. Residues 31-41 (PSPSGDLHFGS) carry the 'HIGH' region motif. Cysteine 120, cysteine 122, tyrosine 134, and cysteine 138 together coordinate Zn(2+). The L-glutamate site is built by tyrosine 191 and arginine 209. The short motif at 247–251 (KLSKQ) is the 'KMSKS' region element. Lysine 250 lines the ATP pocket.

This sequence belongs to the class-I aminoacyl-tRNA synthetase family. GluQ subfamily. The cofactor is Zn(2+).

Its function is as follows. Catalyzes the tRNA-independent activation of glutamate in presence of ATP and the subsequent transfer of glutamate onto a tRNA(Asp). Glutamate is transferred on the 2-amino-5-(4,5-dihydroxy-2-cyclopenten-1-yl) moiety of the queuosine in the wobble position of the QUC anticodon. The chain is Glutamyl-Q tRNA(Asp) synthetase from Pectobacterium atrosepticum (strain SCRI 1043 / ATCC BAA-672) (Erwinia carotovora subsp. atroseptica).